We begin with the raw amino-acid sequence, 431 residues long: Dihydroorotase (431 aa).

His59 and His61 together coordinate Zn(2+). Residues 61-63 and Asn93 each bind substrate; that span reads HLR. Zn(2+) contacts are provided by Asp151, His178, His231, and Asp304. Residue Asp304 is part of the active site. Residues His308 and 322-323 each bind substrate; that span reads FG.

This sequence belongs to the metallo-dependent hydrolases superfamily. DHOase family. Class I DHOase subfamily. Zn(2+) is required as a cofactor.

The enzyme catalyses (S)-dihydroorotate + H2O = N-carbamoyl-L-aspartate + H(+). Its pathway is pyrimidine metabolism; UMP biosynthesis via de novo pathway; (S)-dihydroorotate from bicarbonate: step 3/3. Functionally, catalyzes the reversible cyclization of carbamoyl aspartate to dihydroorotate. The chain is Dihydroorotase from Thermoanaerobacter sp. (strain X514).